Consider the following 117-residue polypeptide: Large ribosomal subunit protein bL19 (117 aa).

Belongs to the bacterial ribosomal protein bL19 family.

Its function is as follows. This protein is located at the 30S-50S ribosomal subunit interface and may play a role in the structure and function of the aminoacyl-tRNA binding site. This Alkalilimnicola ehrlichii (strain ATCC BAA-1101 / DSM 17681 / MLHE-1) protein is Large ribosomal subunit protein bL19.